A 211-amino-acid polypeptide reads, in one-letter code: Protein N-terminal glutamine amidohydrolase (211 aa).

Active-site residues include Cys-24, His-78, and Asp-94.

It belongs to the NTAQ1 family. Monomer.

It carries out the reaction N-terminal L-glutaminyl-[protein] + H2O = N-terminal L-glutamyl-[protein] + NH4(+). Mediates the side-chain deamidation of N-terminal glutamine residues to glutamate, an important step in N-end rule pathway of protein degradation. Conversion of the resulting N-terminal glutamine to glutamate renders the protein susceptible to arginylation, polyubiquitination and degradation as specified by the N-end rule. Does not act on substrates with internal or C-terminal glutamine and does not act on non-glutamine residues in any position. This is Protein N-terminal glutamine amidohydrolase (tun) from Anopheles gambiae (African malaria mosquito).